The chain runs to 502 residues: Aspartyl/glutamyl-tRNA(Asn/Gln) amidotransferase subunit B (502 aa).

Belongs to the GatB/GatE family. GatB subfamily. In terms of assembly, heterotrimer of A, B and C subunits.

The catalysed reaction is L-glutamyl-tRNA(Gln) + L-glutamine + ATP + H2O = L-glutaminyl-tRNA(Gln) + L-glutamate + ADP + phosphate + H(+). It catalyses the reaction L-aspartyl-tRNA(Asn) + L-glutamine + ATP + H2O = L-asparaginyl-tRNA(Asn) + L-glutamate + ADP + phosphate + 2 H(+). Allows the formation of correctly charged Asn-tRNA(Asn) or Gln-tRNA(Gln) through the transamidation of misacylated Asp-tRNA(Asn) or Glu-tRNA(Gln) in organisms which lack either or both of asparaginyl-tRNA or glutaminyl-tRNA synthetases. The reaction takes place in the presence of glutamine and ATP through an activated phospho-Asp-tRNA(Asn) or phospho-Glu-tRNA(Gln). The polypeptide is Aspartyl/glutamyl-tRNA(Asn/Gln) amidotransferase subunit B (Brucella suis (strain ATCC 23445 / NCTC 10510)).